The primary structure comprises 65 residues: Large ribosomal subunit protein bL35 (65 aa).

It belongs to the bacterial ribosomal protein bL35 family.

In Prochlorococcus marinus (strain MIT 9215), this protein is Large ribosomal subunit protein bL35.